The following is a 396-amino-acid chain: Elongation factor Tu (396 aa).

Residues 10-206 (KPHVNVGTIG…ALDTYIPTPE (197 aa)) enclose the tr-type G domain. Residues 19-26 (GHVDHGKT) are G1. Position 19–26 (19–26 (GHVDHGKT)) interacts with GTP. Threonine 26 is a Mg(2+) binding site. The interval 60–64 (GITIN) is G2. The interval 81–84 (DCPG) is G3. GTP is bound by residues 81–85 (DCPGH) and 136–139 (NKCD). The segment at 136–139 (NKCD) is G4. Residues 174–176 (SAK) form a G5 region.

The protein belongs to the TRAFAC class translation factor GTPase superfamily. Classic translation factor GTPase family. EF-Tu/EF-1A subfamily. As to quaternary structure, monomer.

The protein localises to the cytoplasm. The catalysed reaction is GTP + H2O = GDP + phosphate + H(+). GTP hydrolase that promotes the GTP-dependent binding of aminoacyl-tRNA to the A-site of ribosomes during protein biosynthesis. This is Elongation factor Tu from Polynucleobacter asymbioticus (strain DSM 18221 / CIP 109841 / QLW-P1DMWA-1) (Polynucleobacter necessarius subsp. asymbioticus).